A 356-amino-acid chain; its full sequence is Glutamine synthetase N-1 (356 aa).

Positions 19-99 (VIAEYIWVGG…VMCDAYTPAG (81 aa)) constitute a GS beta-grasp domain. In terms of domain architecture, GS catalytic spans 106-356 (KRHNAAKIFS…IAETTLLWKP (251 aa)).

The protein belongs to the glutamine synthetase family. Homooctamer. In terms of tissue distribution, this is a nodule isozyme.

It localises to the cytoplasm. It catalyses the reaction L-glutamate + NH4(+) + ATP = L-glutamine + ADP + phosphate + H(+). The protein is Glutamine synthetase N-1 (Gln-gamma) of Phaseolus vulgaris (Kidney bean).